A 203-amino-acid chain; its full sequence is Nudix hydrolase 12, mitochondrial (203 aa).

In terms of domain architecture, Nudix hydrolase spans 18–166 (NFRLVSGCIP…WMQRALEEFL (149 aa)). The short motif at 66–87 (GGWEDDETVLEAASREAIEEAG) is the Nudix box element. 2 residues coordinate Mg(2+): Glu-81 and Glu-85.

It belongs to the Nudix hydrolase family. Requires Mg(2+) as cofactor. It depends on Mn(2+) as a cofactor. In terms of tissue distribution, expressed in roots, leaves, stems and inflorescences.

Its subcellular location is the mitochondrion. Its function is as follows. Probably mediates the hydrolysis of some nucleoside diphosphate derivatives. This is Nudix hydrolase 12, mitochondrial (NUDT12) from Arabidopsis thaliana (Mouse-ear cress).